The sequence spans 1416 residues: Uveal autoantigen with coiled-coil domains and ankyrin repeats (1416 aa).

The residue at position 1 (M1) is an N-acetylmethionine. The segment at M1–A24 is disordered. ANK repeat units lie at residues L38–V66, E67–T96, A100–H129, Q133–A162, D166–S195, and Q199–L228. Coiled-coil stretches lie at residues V286–K374 and E438–T1386. A Glycyl lysine isopeptide (Lys-Gly) (interchain with G-Cter in SUMO2) cross-link involves residue K1035.

As to quaternary structure, component of the apoptosome complex, composed of APAF1, pro-caspase-9 and UACA. In the complex, it probably interacts directly with APAF1. Interacts with LGALS3, ARF6 and ACTB. Interacts with RAB39A. Highly expressed in skeletal muscle, heart, kidney and pancreas. Expressed in choroid, retina and epidermal melanocytes. Expressed in eye muscles and thyroid follicular cells.

It localises to the nucleus. It is found in the cytoplasm. Its subcellular location is the cytoskeleton. Functionally, regulates APAF1 expression and plays an important role in the regulation of stress-induced apoptosis. Promotes apoptosis by regulating three pathways, apoptosome up-regulation, LGALS3/galectin-3 down-regulation and NF-kappa-B inactivation. Regulates the redistribution of APAF1 into the nucleus after proapoptotic stress. Down-regulates the expression of LGALS3 by inhibiting NFKB1. In terms of biological role, modulates isoactin dynamics to regulate the morphological alterations required for cell growth and motility. Interaction with ARF6 may modulate cell shape and motility after injury. May be involved in multiple neurite formation. The polypeptide is Uveal autoantigen with coiled-coil domains and ankyrin repeats (UACA) (Homo sapiens (Human)).